We begin with the raw amino-acid sequence, 560 residues long: Dimethylaniline monooxygenase [N-oxide-forming] 4 (560 aa).

FAD is bound by residues 9 to 13, E32, and 40 to 41; these read GAGVS and LW. Residues 60-61 and 195-198 contribute to the NADP(+) site; these read TN and TGGD. A helical membrane pass occupies residues 510–530; sequence LSHYLIAWGAPVLLVSLLLIY.

It belongs to the FMO family. It depends on FAD as a cofactor.

It localises to the microsome membrane. The protein localises to the endoplasmic reticulum membrane. The catalysed reaction is N,N-dimethylaniline + NADPH + O2 + H(+) = N,N-dimethylaniline N-oxide + NADP(+) + H2O. This protein is involved in the oxidative metabolism of a variety of xenobiotics such as drugs and pesticides. This Mus musculus (Mouse) protein is Dimethylaniline monooxygenase [N-oxide-forming] 4 (Fmo4).